A 230-amino-acid polypeptide reads, in one-letter code: Cytidylate kinase (230 aa).

An ATP-binding site is contributed by 12-20 (GPSGAGKGT).

The protein belongs to the cytidylate kinase family. Type 1 subfamily.

It is found in the cytoplasm. It catalyses the reaction CMP + ATP = CDP + ADP. It carries out the reaction dCMP + ATP = dCDP + ADP. This Yersinia pseudotuberculosis serotype O:1b (strain IP 31758) protein is Cytidylate kinase.